We begin with the raw amino-acid sequence, 78 residues long: Large ribosomal subunit protein eL20 (78 aa).

The protein belongs to the eukaryotic ribosomal protein eL20 family. Part of the 50S ribosomal subunit. Binds 23S rRNA.

This Pyrobaculum neutrophilum (strain DSM 2338 / JCM 9278 / NBRC 100436 / V24Sta) (Thermoproteus neutrophilus) protein is Large ribosomal subunit protein eL20.